The sequence spans 159 residues: RNA pyrophosphohydrolase (159 aa).

The 144-residue stretch at 6–149 (GFRPNVGIIL…KREVYRRALK (144 aa)) folds into the Nudix hydrolase domain. The Nudix box motif lies at 38-59 (GGINDRETPEEALYRELNEEVG).

This sequence belongs to the Nudix hydrolase family. RppH subfamily. It depends on a divalent metal cation as a cofactor.

In terms of biological role, accelerates the degradation of transcripts by removing pyrophosphate from the 5'-end of triphosphorylated RNA, leading to a more labile monophosphorylated state that can stimulate subsequent ribonuclease cleavage. The sequence is that of RNA pyrophosphohydrolase from Pseudomonas aeruginosa (strain LESB58).